A 369-amino-acid polypeptide reads, in one-letter code: Methylthioribose-1-phosphate isomerase (369 aa).

Substrate is bound by residues 54–56 (RGA), R95, and Q208. The active-site Proton donor is D249. 259–260 (NK) lines the substrate pocket.

Belongs to the eIF-2B alpha/beta/delta subunits family. MtnA subfamily.

It carries out the reaction 5-(methylsulfanyl)-alpha-D-ribose 1-phosphate = 5-(methylsulfanyl)-D-ribulose 1-phosphate. The protein operates within amino-acid biosynthesis; L-methionine biosynthesis via salvage pathway; L-methionine from S-methyl-5-thio-alpha-D-ribose 1-phosphate: step 1/6. In terms of biological role, catalyzes the interconversion of methylthioribose-1-phosphate (MTR-1-P) into methylthioribulose-1-phosphate (MTRu-1-P). In Desulfosudis oleivorans (strain DSM 6200 / JCM 39069 / Hxd3) (Desulfococcus oleovorans), this protein is Methylthioribose-1-phosphate isomerase.